Reading from the N-terminus, the 136-residue chain is Histone H3 (136 aa).

Residues 1 to 43 form a disordered region; the sequence is MARTKQTARKSTGAKAPRKQLASKAARKSAPATGGIKKPHRFR. 2 positions are modified to N6,N6,N6-trimethyllysine; alternate: Lys5 and Lys10. Residue Lys5 is modified to N6,N6-dimethyllysine; alternate. 2 positions are modified to N6-acetyllysine; alternate: Lys5 and Lys10. Residue Lys5 is modified to N6-methyllysine; alternate. Ser11 bears the Phosphoserine mark. Lys15, Lys19, and Lys24 each carry N6-acetyllysine. 2 positions are modified to N6,N6,N6-trimethyllysine; alternate: Lys28 and Lys37. An N6,N6-dimethyllysine; alternate mark is found at Lys28 and Lys37. N6-acetyllysine; alternate is present on residues Lys28, Lys37, and Lys57. N6-methyllysine; alternate occurs at positions 28, 37, and 57. N6-methyllysine is present on Lys80.

Belongs to the histone H3 family. As to quaternary structure, the nucleosome is a histone octamer containing two molecules each of H2A, H2B, H3 and H4 assembled in one H3-H4 heterotetramer and two H2A-H2B heterodimers. The octamer wraps approximately 147 bp of DNA. Phosphorylated to form H3S10ph. H3S10ph promotes subsequent H3K14ac formation by GCN5. H3S10ph is only found in the mitotically dividing MIC, but not in the amitotically dividing MAC. H3S10ph is correlated with chromosome condensation during mitotic or meiotic micronuclear divisions. Post-translationally, acetylation of histone H3 leads to transcriptional activation. H3K14ac formation by GCN5 is promoted by H3S10ph. H3K9acK14ac is the preferred acetylated form of newly synthesized H3. Acetylation occurs almost exclusively in the MAC. In terms of processing, methylated to form H3K4me. H3K4me is only found in the transcriptionally active MAC. Methylated to form H3K9me in developing MACs during conjugation, when genome-wide DNA elimination occurs. At this stage, H3K9me specifically occurs on DNA sequences being eliminated (IES), probably targeted by small scan RNAs (scnRNAs) bound to IES, and is required for efficient IES elimination. H3K9me is required for the interaction with the chromodomains of PDD1 and PDD3. The full-length protein H3S (slow migrating) is converted to H3F (fast migrating) by proteolytic removal of the first 6 residues. H3F is unique to MIC, and processing seems to occur regularly each generation at a specific point in the cell cycle.

The protein localises to the nucleus. It localises to the chromosome. Its function is as follows. Core component of nucleosome. Nucleosomes wrap and compact DNA into chromatin, limiting DNA accessibility to the cellular machineries which require DNA as a template. Histones thereby play a central role in transcription regulation, DNA repair, DNA replication and chromosomal stability. DNA accessibility is regulated via a complex set of post-translational modifications of histones, also called histone code, and nucleosome remodeling. The polypeptide is Histone H3 (Tetrahymena pyriformis).